The chain runs to 391 residues: F-box/kelch-repeat protein At3g16740 (391 aa).

The F-box domain maps to 1 to 47 (MVQISDLPRDLTEEVLSRIPVTSMRAVRFTCKKWNTLSKDRSFTKKH). Kelch repeat units lie at residues 104–154 (KIFH…YEEK) and 163–215 (ILRF…LKGN).

In terms of assembly, part of a SCF (ASK-cullin-F-box) protein ligase complex. Interacts with ASK11.

The protein localises to the nucleus. Its pathway is protein modification; protein ubiquitination. In terms of biological role, component of SCF(ASK-cullin-F-box) E3 ubiquitin ligase complexes, which may mediate the ubiquitination and subsequent proteasomal degradation of target proteins. The sequence is that of F-box/kelch-repeat protein At3g16740 from Arabidopsis thaliana (Mouse-ear cress).